A 294-amino-acid polypeptide reads, in one-letter code: Putative immediate early glycoprotein (294 aa).

The signal sequence occupies residues 1-21; it reads MKKLTMESLLVYTFVMGVCFT. A helical transmembrane segment spans residues 262-282; sequence LFFLAGGAFTMLLLLCCLSMI.

It belongs to the herpesviridae immediate early glycoprotein family.

It localises to the host membrane. The protein is Putative immediate early glycoprotein (U18) of Homo sapiens (Human).